A 278-amino-acid polypeptide reads, in one-letter code: Diaminopimelate epimerase (278 aa).

Substrate is bound by residues asparagine 13 and asparagine 66. Cysteine 75 serves as the catalytic Proton donor. Substrate is bound by residues 76–77 (GN), asparagine 162, asparagine 195, and 213–214 (ER). Cysteine 222 acts as the Proton acceptor in catalysis. 223-224 (GT) is a substrate binding site.

It belongs to the diaminopimelate epimerase family. In terms of assembly, homodimer.

The protein localises to the cytoplasm. The enzyme catalyses (2S,6S)-2,6-diaminopimelate = meso-2,6-diaminopimelate. It functions in the pathway amino-acid biosynthesis; L-lysine biosynthesis via DAP pathway; DL-2,6-diaminopimelate from LL-2,6-diaminopimelate: step 1/1. Its function is as follows. Catalyzes the stereoinversion of LL-2,6-diaminopimelate (L,L-DAP) to meso-diaminopimelate (meso-DAP), a precursor of L-lysine and an essential component of the bacterial peptidoglycan. This is Diaminopimelate epimerase from Trichodesmium erythraeum (strain IMS101).